Here is a 339-residue protein sequence, read N- to C-terminus: Erlin-2 (339 aa).

Topologically, residues Met1–Gln3 are cytoplasmic. Residues Leu4–His24 traverse the membrane as a helical segment. At Lys25 to Asn339 the chain is on the lumenal side. Asn106 carries an N-linked (GlcNAc...) asparagine glycan. The interval Glu177–Ala309 is interaction with ERLIN1. An N6-acetyllysine modification is found at Lys267.

It belongs to the band 7/mec-2 family. As to quaternary structure, forms a heteromeric complex with ERLIN1. In complex with ERLIN1, interacts with RNF170. Interacts with activated ITPR1, independently of the degree of ITPR1 polyubiquitination. Interacts with SCAP, INSIG1, SREBF1 and SREBF2 under cholesterol sufficiency conditions; indicative for an association with the SCAP-SREBP-INSIG complex. Probably part of an AMFR/gp78 and INSIG1-containing ubiquitin ligase complex involved in ERAD of HMGCR. Interacts with TMUB1; TMUB1 bridges the association with AMFR. Interacts with SYVN1 and RNF139. Interacts with TMEM259. Interacts with TMEM41B. Deubiquitinated by USP25; leading to stabilization. In terms of tissue distribution, ubiquitous.

The protein localises to the endoplasmic reticulum membrane. Component of the ERLIN1/ERLIN2 complex which mediates the endoplasmic reticulum-associated degradation (ERAD) of inositol 1,4,5-trisphosphate receptors (IP3Rs) such as ITPR1. Promotes sterol-accelerated ERAD of HMGCR probably implicating an AMFR/gp78-containing ubiquitin ligase complex. Involved in regulation of cellular cholesterol homeostasis by regulation the SREBP signaling pathway. May promote ER retention of the SCAP-SREBF complex. In Homo sapiens (Human), this protein is Erlin-2 (ERLIN2).